The sequence spans 320 residues: Heterogeneous nuclear ribonucleoprotein A1-like 3 (320 aa).

RRM domains follow at residues 14-97 (RKLF…DSQR) and 105-184 (KKIF…LSKQ). Disordered regions lie at residues 182–218 (SKQE…NFGR) and 271–320 (SNFG…GRRF). Gly residues predominate over residues 197–218 (SGSGNFGGGRGGGFGGNDNFGR). Low complexity predominate over residues 308 to 320 (SSSSSSYGSGRRF).

This is Heterogeneous nuclear ribonucleoprotein A1-like 3 from Homo sapiens (Human).